Reading from the N-terminus, the 330-residue chain is Protein qutG (330 aa).

5 residues coordinate Mg(2+): E78, D100, L102, D103, and D251. E78 serves as a coordination point for substrate. Residues 102–105 (LDGT) and D251 contribute to the substrate site.

This sequence belongs to the inositol monophosphatase superfamily.

Functionally, not known. Probably involved in quinate metabolism. This is Protein qutG (qutG) from Emericella nidulans (strain FGSC A4 / ATCC 38163 / CBS 112.46 / NRRL 194 / M139) (Aspergillus nidulans).